We begin with the raw amino-acid sequence, 136 residues long: MAHTNDTIADMLTRIRNATMARHESVAVPATRMTRSIARVLHEEGFVSEWKEEGEGIQARVVLRLKYKGKGRNCRPIINGLKRVSRPGLRVYRNHKELPRVLGGIGIAIISTSNGIMTDREARKQGIGGEVLCLVY.

Belongs to the universal ribosomal protein uS8 family. Part of the 30S ribosomal subunit. Contacts proteins S5 and S12.

Its function is as follows. One of the primary rRNA binding proteins, it binds directly to 16S rRNA central domain where it helps coordinate assembly of the platform of the 30S subunit. This Synechococcus sp. (strain JA-2-3B'a(2-13)) (Cyanobacteria bacterium Yellowstone B-Prime) protein is Small ribosomal subunit protein uS8.